The following is a 103-amino-acid chain: uncharacterized protein (103 aa).

This is an uncharacterized protein from Caenorhabditis elegans.